The chain runs to 205 residues: Large ribosomal subunit protein uL3c (205 aa).

Positions 127–153 (HFSRGPMSHGSKNHRQPGSIGAGTTPG) are disordered.

This sequence belongs to the universal ribosomal protein uL3 family. Part of the 50S ribosomal subunit.

It is found in the plastid. The protein localises to the chloroplast. Functionally, one of the primary rRNA binding proteins, it binds directly near the 3'-end of the 23S rRNA, where it nucleates assembly of the 50S subunit. The chain is Large ribosomal subunit protein uL3c (rpl3) from Porphyra purpurea (Red seaweed).